The primary structure comprises 450 residues: Bifunctional protein GlmU (450 aa).

Residues 1–229 (MGVALIVLAA…EAETLGINTR (229 aa)) form a pyrophosphorylase region. UDP-N-acetyl-alpha-D-glucosamine is bound by residues 8 to 11 (LAAG), K22, Q75, 80 to 81 (GT), 103 to 105 (YGD), G141, E155, N170, and N227. Residue D105 participates in Mg(2+) binding. N227 lines the Mg(2+) pocket. A linker region spans residues 230–250 (TELAAAEQAFQARARARALED). The N-acetyltransferase stretch occupies residues 251-450 (GVTLADPATT…RARKSAKGAQ (200 aa)). UDP-N-acetyl-alpha-D-glucosamine-binding residues include R316 and K334. The active-site Proton acceptor is H346. UDP-N-acetyl-alpha-D-glucosamine-binding residues include Y349 and N360. Residues A363, 369-370 (NY), S388, T406, and R423 each bind acetyl-CoA.

This sequence in the N-terminal section; belongs to the N-acetylglucosamine-1-phosphate uridyltransferase family. The protein in the C-terminal section; belongs to the transferase hexapeptide repeat family. Homotrimer. The cofactor is Mg(2+).

Its subcellular location is the cytoplasm. It catalyses the reaction alpha-D-glucosamine 1-phosphate + acetyl-CoA = N-acetyl-alpha-D-glucosamine 1-phosphate + CoA + H(+). The catalysed reaction is N-acetyl-alpha-D-glucosamine 1-phosphate + UTP + H(+) = UDP-N-acetyl-alpha-D-glucosamine + diphosphate. It functions in the pathway nucleotide-sugar biosynthesis; UDP-N-acetyl-alpha-D-glucosamine biosynthesis; N-acetyl-alpha-D-glucosamine 1-phosphate from alpha-D-glucosamine 6-phosphate (route II): step 2/2. The protein operates within nucleotide-sugar biosynthesis; UDP-N-acetyl-alpha-D-glucosamine biosynthesis; UDP-N-acetyl-alpha-D-glucosamine from N-acetyl-alpha-D-glucosamine 1-phosphate: step 1/1. Its pathway is bacterial outer membrane biogenesis; LPS lipid A biosynthesis. Its function is as follows. Catalyzes the last two sequential reactions in the de novo biosynthetic pathway for UDP-N-acetylglucosamine (UDP-GlcNAc). The C-terminal domain catalyzes the transfer of acetyl group from acetyl coenzyme A to glucosamine-1-phosphate (GlcN-1-P) to produce N-acetylglucosamine-1-phosphate (GlcNAc-1-P), which is converted into UDP-GlcNAc by the transfer of uridine 5-monophosphate (from uridine 5-triphosphate), a reaction catalyzed by the N-terminal domain. The polypeptide is Bifunctional protein GlmU (Dinoroseobacter shibae (strain DSM 16493 / NCIMB 14021 / DFL 12)).